A 266-amino-acid polypeptide reads, in one-letter code: RNA-binding protein 7 (266 aa).

Gly-2 carries the post-translational modification N-acetylglycine. One can recognise an RRM domain in the interval 10–87 (RTLFVGNLET…RPIKIQFRSG (78 aa)). ZCCHC8 binding regions lie at residues 25–35 (LLFELFHQAGP) and 59–76 (HEVS…IKLY). The segment covering 90-115 (HAPQDVSLSYPQHHVGNSSPTSTSPS) has biased composition (polar residues). Residues 90-118 (HAPQDVSLSYPQHHVGNSSPTSTSPSRYE) are disordered. Residues Ser-136 and Ser-137 each carry the phosphoserine modification. Residue Arg-152 is modified to Omega-N-methylarginine. Residues 162 to 266 (SSPLDQSGFS…RDGKWRSSRH (105 aa)) form a disordered region. Residues 173 to 188 (SVQSHSHSFNQSSSSQ) show a composition bias toward low complexity. A Phosphoserine modification is found at Ser-204. The span at 209–266 (ADRHYSREQRYTDHGSDHHYRGKRDDFFYEDRNHDDWSHDYDNRRDSSRDGKWRSSRH) shows a compositional bias: basic and acidic residues.

In terms of assembly, component of the nuclear exosome targeting (NEXT) complex composed of MTREX, ZCCHC8, and RBM7 that directs a subset of non-coding short-lived RNAs for exosomal degradation. Interacts with ZCCHC8 and SF3B2/SAP145. Binds to MTREX through ZCCHC8. Interacts with YWHAE and YWHAZ; these interactions are stress-dependent and RBM7 phosphorylation dependent; release RNA from the NEXT complex and may affect RNA targeting to the nuclear RNA exosomome for degradation. Interacts with MEPCE and LARP7, the core subunits of 7SK snRNP; upon genotoxic stress this interaction is enhanced, triggering the release of inactive P-TEFb complex from the core and P-TEFb complex activation. Phosphorylated at Ser-136 by MAPK14/p38-alpha-activated MAPKAPK2/MK2; this phosphorylation is stress-dependent; this phosphorylation decreases its RNA-binding capacity therefore affecting RNA nuclear exosome-mediated degradation. This phosphorylation mediates YWHAE and YWHAZ interactions. As to expression, ubiquitous.

It localises to the nucleus. It is found in the nucleoplasm. In terms of biological role, RNA-binding subunit of the trimeric nuclear exosome targeting (NEXT) complex, a complex that functions as an RNA exosome cofactor that directs a subset of non-coding short-lived RNAs for exosomal degradation. NEXT is involved in surveillance and turnover of aberrant transcripts and non-coding RNAs. Binds preferentially polyuridine sequences and associates with newly synthesized RNAs, including pre-mRNAs and short-lived exosome substrates such as promoter upstream transcripts (PROMPTs), enhancer RNAs (eRNAs), and 3'-extended products from small nuclear RNAs (snRNAs). Participates in several biological processes including DNA damage response (DDR) and stress response. During stress response, activation of the p38MAPK-MK2 pathway decreases RBM7-RNA-binding and subsequently the RNA exosome degradation activities, thereby modulating the turnover of non-coding transcriptome. Participates in DNA damage response (DDR), through its interaction with MEPCE and LARP7, the core subunits of 7SK snRNP complex, that release the positive transcription elongation factor b (P-TEFb) complex from the 7SK snRNP. In turn, activation of P-TEFb complex induces the transcription of P-TEFb-dependent DDR genes to promote cell viability. In Homo sapiens (Human), this protein is RNA-binding protein 7.